The following is a 311-amino-acid chain: Aspartate carbamoyltransferase catalytic subunit (311 aa).

Residues R55 and T56 each coordinate carbamoyl phosphate. K85 contributes to the L-aspartate binding site. Residues R106, H135, and Q138 each contribute to the carbamoyl phosphate site. L-aspartate is bound by residues R168 and R230. 2 residues coordinate carbamoyl phosphate: L268 and P269.

It belongs to the aspartate/ornithine carbamoyltransferase superfamily. ATCase family. In terms of assembly, heterododecamer (2C3:3R2) of six catalytic PyrB chains organized as two trimers (C3), and six regulatory PyrI chains organized as three dimers (R2).

The enzyme catalyses carbamoyl phosphate + L-aspartate = N-carbamoyl-L-aspartate + phosphate + H(+). It participates in pyrimidine metabolism; UMP biosynthesis via de novo pathway; (S)-dihydroorotate from bicarbonate: step 2/3. Functionally, catalyzes the condensation of carbamoyl phosphate and aspartate to form carbamoyl aspartate and inorganic phosphate, the committed step in the de novo pyrimidine nucleotide biosynthesis pathway. This is Aspartate carbamoyltransferase catalytic subunit from Salmonella arizonae (strain ATCC BAA-731 / CDC346-86 / RSK2980).